The following is a 119-amino-acid chain: Ribonuclease P protein component (119 aa).

Belongs to the RnpA family. As to quaternary structure, consists of a catalytic RNA component (M1 or rnpB) and a protein subunit.

It carries out the reaction Endonucleolytic cleavage of RNA, removing 5'-extranucleotides from tRNA precursor.. Functionally, RNaseP catalyzes the removal of the 5'-leader sequence from pre-tRNA to produce the mature 5'-terminus. It can also cleave other RNA substrates such as 4.5S RNA. The protein component plays an auxiliary but essential role in vivo by binding to the 5'-leader sequence and broadening the substrate specificity of the ribozyme. The protein is Ribonuclease P protein component of Bifidobacterium longum (strain DJO10A).